Here is a 207-residue protein sequence, read N- to C-terminus: Small ribosomal subunit protein uS4c (207 aa).

Residues 92–155 (MRLDNILFRL…TYQSILSKRI (64 aa)) form the S4 RNA-binding domain.

This sequence belongs to the universal ribosomal protein uS4 family. In terms of assembly, part of the 30S ribosomal subunit. Contacts protein S5. The interaction surface between S4 and S5 is involved in control of translational fidelity.

The protein localises to the plastid. It localises to the chloroplast. Its function is as follows. One of the primary rRNA binding proteins, it binds directly to 16S rRNA where it nucleates assembly of the body of the 30S subunit. With S5 and S12 plays an important role in translational accuracy. In Equisetum giganteum (Giant horsetail), this protein is Small ribosomal subunit protein uS4c (rps4).